The following is a 254-amino-acid chain: Trans-aconitate 2-methyltransferase (254 aa).

The protein belongs to the methyltransferase superfamily. Tam family.

It localises to the cytoplasm. The catalysed reaction is trans-aconitate + S-adenosyl-L-methionine = (E)-3-(methoxycarbonyl)pent-2-enedioate + S-adenosyl-L-homocysteine. In terms of biological role, catalyzes the S-adenosylmethionine monomethyl esterification of trans-aconitate. This chain is Trans-aconitate 2-methyltransferase, found in Mycobacterium sp. (strain JLS).